The following is a 226-amino-acid chain: Orotate phosphoribosyltransferase (226 aa).

A 5-phospho-alpha-D-ribose 1-diphosphate-binding site is contributed by lysine 30. 38–39 (FF) is a binding site for orotate. 5-phospho-alpha-D-ribose 1-diphosphate is bound by residues 76 to 77 (YK), arginine 106, lysine 107, lysine 110, histidine 112, and 132 to 140 (DDVMTAGTA). Orotate is bound by residues threonine 136 and arginine 164.

It belongs to the purine/pyrimidine phosphoribosyltransferase family. PyrE subfamily. In terms of assembly, homodimer.

It catalyses the reaction orotidine 5'-phosphate + diphosphate = orotate + 5-phospho-alpha-D-ribose 1-diphosphate. It functions in the pathway pyrimidine metabolism; UMP biosynthesis via de novo pathway; UMP from orotate: step 1/2. In terms of biological role, catalyzes the transfer of a ribosyl phosphate group from 5-phosphoribose 1-diphosphate to orotate, leading to the formation of orotidine monophosphate (OMP). This chain is Orotate phosphoribosyltransferase (URA5), found in Kluyveromyces lactis (strain ATCC 8585 / CBS 2359 / DSM 70799 / NBRC 1267 / NRRL Y-1140 / WM37) (Yeast).